Here is a 425-residue protein sequence, read N- to C-terminus: Interferon-activable protein 211 (425 aa).

A Pyrin domain is found at 1 to 88; it reads MVNEYKRIVL…AEILKKERSE (88 aa). The segment covering 86–99 has biased composition (basic and acidic residues); it reads RSEVTGETSLEKNG. The segment at 86 to 223 is disordered; the sequence is RSEVTGETSL…QNQNIPRGAV (138 aa). A compositionally biased stretch (low complexity) spans 122-153; sequence TSATQEETSTAQAGTSTAQAGTSTAQAGTSTA. Tandem repeats lie at residues 129-135, 136-142, 143-149, and 150-156. The interval 129-177 is 4 X 7 AA tandem repeats of T-S-T-A-Q-A-[GR]; the sequence is TSTAQAGTSTAQAGTSTAQAGTSTAQKRKSMREEETGVKKSKAAKEPDQ. A compositionally biased stretch (basic and acidic residues) spans 159–176; sequence MREEETGVKKSKAAKEPD. Residues 190 to 206 are compositionally biased toward low complexity; it reads SPILHSSSSASSNILSA. The segment covering 207–218 has biased composition (polar residues); sequence KNQKSQPQNQNI. The 201-residue stretch at 213-413 folds into the HIN-200 domain; that stretch reads PQNQNIPRGA…CGDHSFVKVT (201 aa).

Belongs to the HIN-200 family. In terms of assembly, interacts with HOXB2. Mononuclear phagocytes.

The protein resides in the nucleus. Its function is as follows. Inhibits cell growth via p53/TP53 and RB1-dependent and independent pathways. May work in synergy with TP53 to promote the transcription of CDKN1A/P21. This chain is Interferon-activable protein 211, found in Mus musculus (Mouse).